A 104-amino-acid chain; its full sequence is N(4)-acetylcytidine amidohydrolase (104 aa).

In terms of domain architecture, ASCH spans 7–95; the sequence is MTFFERFETD…IQDIYPGISQ (89 aa). K22 acts as the Proton acceptor in catalysis. T25 serves as the catalytic Nucleophile. Catalysis depends on E75, which acts as the Proton donor.

Belongs to the N(4)-acetylcytidine amidohydrolase family.

It catalyses the reaction N(4)-acetylcytidine + H2O = cytidine + acetate + H(+). The enzyme catalyses N(4)-acetyl-2'-deoxycytidine + H2O = 2'-deoxycytidine + acetate + H(+). The catalysed reaction is N(4)-acetylcytosine + H2O = cytosine + acetate + H(+). Its function is as follows. Catalyzes the hydrolysis of N(4)-acetylcytidine (ac4C). The polypeptide is N(4)-acetylcytidine amidohydrolase (Vibrio atlanticus (strain LGP32) (Vibrio splendidus (strain Mel32))).